We begin with the raw amino-acid sequence, 368 residues long: Geranylgeranyl pyrophosphate synthase dpfgD (368 aa).

Lys48, Arg51, and His80 together coordinate isopentenyl diphosphate. 2 residues coordinate Mg(2+): Asp87 and Asp91. Arg96 provides a ligand contact to dimethylallyl diphosphate. Arg97 is a binding site for isopentenyl diphosphate. Lys174, Thr175, and Gln208 together coordinate dimethylallyl diphosphate. Asp211 contributes to the Mg(2+) binding site. Dimethylallyl diphosphate contacts are provided by Asn215, Lys225, and Lys235.

Belongs to the FPP/GGPP synthase family. Mg(2+) is required as a cofactor.

The catalysed reaction is isopentenyl diphosphate + dimethylallyl diphosphate = (2E)-geranyl diphosphate + diphosphate. The enzyme catalyses isopentenyl diphosphate + (2E)-geranyl diphosphate = (2E,6E)-farnesyl diphosphate + diphosphate. It catalyses the reaction isopentenyl diphosphate + (2E,6E)-farnesyl diphosphate = (2E,6E,10E)-geranylgeranyl diphosphate + diphosphate. It participates in secondary metabolite biosynthesis; terpenoid biosynthesis. Geranylgeranyl pyrophosphate synthase; part of the gene cluster that mediates the biosynthesis of diterpenoid pyrones. The first step of the pathway is the synthesis of the alpha-pyrone moiety by the polyketide synthase dpfgA via condensation of one acetyl-CoA starter unit with 3 malonyl-CoA units and 2 methylations. The alpha-pyrone is then combined with geranylgeranyl pyrophosphate (GGPP) formed by the GGPP synthase dpfgD through the action of the prenyltransferase dpfgC to yield a linear alpha-pyrone diterpenoid. Subsequent steps in the diterpenoid pyrone biosynthetic pathway involve the decalin core formation, which is initiated by the epoxidation of the C10-C11 olefin by the FAD-dependent oxidoreductase dpfgE, and is followed by a cyclization cascade catalyzed by the terpene cyclase dpfgB. The short chain dehydrogenase/reductase dpfgG then oxidizes the 8S hydroxy group to a ketone and the short chain dehydrogenase/reductase dpfgH reduces the ketone to the 8R hydroxy group to yield higginsianin B. Higginsianin B is further methylated by the methyltransferase dpfgI to produce the intermediate named FDDP B. The cytochrome P450 monooxygenase dfgpJ then catalyzes a three-step oxidation at C-27 to generate a carboxylic acid as well as C-26 hydroxylation. Finally, methyltransferase dpfgK methylates the carboxylic acid generated by dpfgJ, yielding the final diterpenoid pyrones from the pathway which were named FDDP D and FDDP E. This Gibberella zeae (strain ATCC MYA-4620 / CBS 123657 / FGSC 9075 / NRRL 31084 / PH-1) (Wheat head blight fungus) protein is Geranylgeranyl pyrophosphate synthase dpfgD.